The primary structure comprises 134 residues: MIEVGEYKVKEGLYYTKEHEWAQVLEDGTVLVGITDYAQKELGDIAYVELPEVGKEVKKGEVLCEVESVKAVSEVYAPVSGEVIEVNEELSDSPEKINEDPYGAWIAKIKPNNLEEELKELMDAEKYAEFLKSL.

Residues 29–110 (TVLVGITDYA…PYGAWIAKIK (82 aa)) enclose the Lipoyl-binding domain. Lys70 is subject to N6-lipoyllysine.

The protein belongs to the GcvH family. As to quaternary structure, the glycine cleavage system is composed of four proteins: P, T, L and H. (R)-lipoate serves as cofactor.

Functionally, the glycine cleavage system catalyzes the degradation of glycine. The H protein shuttles the methylamine group of glycine from the P protein to the T protein. This chain is Probable glycine cleavage system H protein, found in Pyrococcus abyssi (strain GE5 / Orsay).